Reading from the N-terminus, the 419-residue chain is 3-isopropylmalate dehydratase large subunit (419 aa).

Positions 302, 362, and 365 each coordinate [4Fe-4S] cluster.

Belongs to the aconitase/IPM isomerase family. LeuC type 2 subfamily. In terms of assembly, heterodimer of LeuC and LeuD. It depends on [4Fe-4S] cluster as a cofactor.

The catalysed reaction is (2R,3S)-3-isopropylmalate = (2S)-2-isopropylmalate. Its pathway is amino-acid biosynthesis; L-leucine biosynthesis; L-leucine from 3-methyl-2-oxobutanoate: step 2/4. In terms of biological role, catalyzes the isomerization between 2-isopropylmalate and 3-isopropylmalate, via the formation of 2-isopropylmaleate. This is 3-isopropylmalate dehydratase large subunit from Sulfurimonas denitrificans (strain ATCC 33889 / DSM 1251) (Thiomicrospira denitrificans (strain ATCC 33889 / DSM 1251)).